We begin with the raw amino-acid sequence, 357 residues long: Inositol-tetrakisphosphate 1-kinase 3 (357 aa).

Lys56 and Lys98 together coordinate 1D-myo-inositol 1,3,4-trisphosphate. Residues Arg133 and Lys183 each contribute to the ATP site. 1D-myo-inositol 1,3,4-trisphosphate-binding residues include His190 and Lys222. ATP contacts are provided by residues 211–222 (QEFVNHGGVLFK), Ser237, and Ser262. Mg(2+) contacts are provided by Asp302, Asp317, and Asn319. Residue Asn319 coordinates 1D-myo-inositol 1,3,4-trisphosphate.

This sequence belongs to the ITPK1 family. Monomer. It depends on Mg(2+) as a cofactor.

It carries out the reaction 1D-myo-inositol 3,4,5,6-tetrakisphosphate + ATP = 1D-myo-inositol 1,3,4,5,6-pentakisphosphate + ADP + H(+). The catalysed reaction is 1D-myo-inositol 1,3,4-trisphosphate + ATP = 1D-myo-inositol 1,3,4,5-tetrakisphosphate + ADP + H(+). The enzyme catalyses 1D-myo-inositol 1,3,4-trisphosphate + ATP = 1D-myo-inositol 1,3,4,6-tetrakisphosphate + ADP + H(+). Functionally, kinase that can phosphorylate various inositol polyphosphate such as Ins(3,4,5,6)P4 or Ins(1,3,4)P3 and participates in phytic acid biosynthesis in developing seeds. Phytic acid is the primary storage form of phosphorus in cereal grains and other plant seeds. The sequence is that of Inositol-tetrakisphosphate 1-kinase 3 (ITPK3) from Oryza sativa subsp. indica (Rice).